The following is a 561-amino-acid chain: Zinc finger protein 394 (561 aa).

Residues 1–61 form a disordered region; that stretch reads MNSSLTAQRR…NYPAASPDPE (61 aa). S12 carries the phosphoserine modification. K40 is covalently cross-linked (Glycyl lysine isopeptide (Lys-Gly) (interchain with G-Cter in SUMO2)). Positions 64-146 constitute an SCAN box domain; the sequence is RLHFRQLRYQ…AVVRALQRAL (83 aa). Residues 155 to 230 form the KRAB domain; the sequence is VTFEDTAVSL…LQEAFQGKRP (76 aa). Residues 182–201 are disordered; that stretch reads ESAQKDSGSTVPPSLESRVE. Glycyl lysine isopeptide (Lys-Gly) (interchain with G-Cter in SUMO2) cross-links involve residues K203 and K228. Residues 231-285 are disordered; that stretch reads LFSKCGSTHEDRVEKQSGDPLPLKLENSPEAEGLNSISDVNKNGSIEGEDSKNNE. Over residues 237-247 the composition is skewed to basic and acidic residues; it reads STHEDRVEKQS. K254 is covalently cross-linked (Glycyl lysine isopeptide (Lys-Gly) (interchain with G-Cter in SUMO2)). The span at 265–274 shows a compositional bias: polar residues; it reads NSISDVNKNG. Residue K282 forms a Glycyl lysine isopeptide (Lys-Gly) (interchain with G-Cter in SUMO2) linkage. 7 consecutive C2H2-type zinc fingers follow at residues 358-380, 386-408, 414-436, 442-463, 469-491, 497-519, and 525-547; these read YKCG…QRIH, YGCQ…QRTH, YTCL…QSTH, FKCE…QRLH, YKCE…HRIH, YGCS…QRIH, and YKCL…QRIH. K443 participates in a covalent cross-link: Glycyl lysine isopeptide (Lys-Gly) (interchain with G-Cter in SUMO2).

The protein belongs to the krueppel C2H2-type zinc-finger protein family.

The protein localises to the nucleus. In terms of biological role, may be involved in transcriptional regulation. In Homo sapiens (Human), this protein is Zinc finger protein 394 (ZNF394).